The chain runs to 93 residues: UPF0337 protein Bd3330 (93 aa).

The protein belongs to the UPF0337 (CsbD) family.

The protein is UPF0337 protein Bd3330 of Bdellovibrio bacteriovorus (strain ATCC 15356 / DSM 50701 / NCIMB 9529 / HD100).